We begin with the raw amino-acid sequence, 171 residues long: Group 1 truncated hemoglobin LI410 (171 aa).

Residues 1–23 constitute a chloroplast transit peptide; it reads MMRTVQLRTLRPCIRAQQQPVRA. Residues tyrosine 63 and histidine 111 each contribute to the heme site.

The protein belongs to the truncated hemoglobin family. Group I subfamily. Heme serves as cofactor.

The protein resides in the plastid. Its subcellular location is the chloroplast. This Chlamydomonas moewusii (Chlamydomonas eugametos) protein is Group 1 truncated hemoglobin LI410 (LI410).